Here is a 329-residue protein sequence, read N- to C-terminus: DNA-directed RNA polymerase subunit alpha (329 aa).

The tract at residues 1 to 231 (MSILSFQMPE…KHFMLFSDQT (231 aa)) is alpha N-terminal domain (alpha-NTD). The tract at residues 247–329 (EEFLHMRKLL…DTAKYKLDED (83 aa)) is alpha C-terminal domain (alpha-CTD).

The protein belongs to the RNA polymerase alpha chain family. Homodimer. The RNAP catalytic core consists of 2 alpha, 1 beta, 1 beta' and 1 omega subunit. When a sigma factor is associated with the core the holoenzyme is formed, which can initiate transcription.

It catalyses the reaction RNA(n) + a ribonucleoside 5'-triphosphate = RNA(n+1) + diphosphate. Its function is as follows. DNA-dependent RNA polymerase catalyzes the transcription of DNA into RNA using the four ribonucleoside triphosphates as substrates. This chain is DNA-directed RNA polymerase subunit alpha, found in Cytophaga hutchinsonii (strain ATCC 33406 / DSM 1761 / CIP 103989 / NBRC 15051 / NCIMB 9469 / D465).